A 452-amino-acid chain; its full sequence is Pup--protein ligase (452 aa).

Residue Glu-9 participates in Mg(2+) binding. Position 53 (Arg-53) interacts with ATP. Residue Tyr-55 participates in Mg(2+) binding. Asp-57 (proton acceptor) is an active-site residue. Glu-63 lines the Mg(2+) pocket. ATP-binding residues include Thr-66 and Trp-419.

It belongs to the Pup ligase/Pup deamidase family. Pup-conjugating enzyme subfamily.

The catalysed reaction is ATP + [prokaryotic ubiquitin-like protein]-L-glutamate + [protein]-L-lysine = ADP + phosphate + N(6)-([prokaryotic ubiquitin-like protein]-gamma-L-glutamyl)-[protein]-L-lysine.. The protein operates within protein degradation; proteasomal Pup-dependent pathway. It functions in the pathway protein modification; protein pupylation. In terms of biological role, catalyzes the covalent attachment of the prokaryotic ubiquitin-like protein modifier Pup to the proteasomal substrate proteins, thereby targeting them for proteasomal degradation. This tagging system is termed pupylation. The ligation reaction involves the side-chain carboxylate of the C-terminal glutamate of Pup and the side-chain amino group of a substrate lysine. This chain is Pup--protein ligase, found in Mycobacterium leprae (strain Br4923).